The following is a 269-amino-acid chain: Hemin import ATP-binding protein HmuV (269 aa).

The 238-residue stretch at 5 to 242 (IETHSVTMRI…GLIRKVFEVC (238 aa)) folds into the ABC transporter domain. 37 to 44 (GPNGAGKS) contributes to the ATP binding site.

The protein belongs to the ABC transporter superfamily. Heme (hemin) importer (TC 3.A.1.14.5) family. As to quaternary structure, the complex is composed of two ATP-binding proteins (HmuV), two transmembrane proteins (HmuU) and a solute-binding protein (HmuT).

Its subcellular location is the cell inner membrane. In terms of biological role, part of the ABC transporter complex HmuTUV involved in hemin import. Responsible for energy coupling to the transport system. The polypeptide is Hemin import ATP-binding protein HmuV (Nitrobacter winogradskyi (strain ATCC 25391 / DSM 10237 / CIP 104748 / NCIMB 11846 / Nb-255)).